Here is a 113-residue protein sequence, read N- to C-terminus: Putative pterin-4-alpha-carbinolamine dehydratase (113 aa).

It belongs to the pterin-4-alpha-carbinolamine dehydratase family.

It catalyses the reaction (4aS,6R)-4a-hydroxy-L-erythro-5,6,7,8-tetrahydrobiopterin = (6R)-L-erythro-6,7-dihydrobiopterin + H2O. The protein is Putative pterin-4-alpha-carbinolamine dehydratase of Saccharophagus degradans (strain 2-40 / ATCC 43961 / DSM 17024).